A 405-amino-acid chain; its full sequence is Probable tRNA sulfurtransferase (405 aa).

Positions 60-165 constitute a THUMP domain; the sequence is DAVINRLKKV…SNGIFLTSEV (106 aa). ATP is bound by residues 183–184, 208–209, R265, G287, and Q296; these read ML and HF.

Belongs to the ThiI family.

Its subcellular location is the cytoplasm. It carries out the reaction [ThiI sulfur-carrier protein]-S-sulfanyl-L-cysteine + a uridine in tRNA + 2 reduced [2Fe-2S]-[ferredoxin] + ATP + H(+) = [ThiI sulfur-carrier protein]-L-cysteine + a 4-thiouridine in tRNA + 2 oxidized [2Fe-2S]-[ferredoxin] + AMP + diphosphate. It catalyses the reaction [ThiS sulfur-carrier protein]-C-terminal Gly-Gly-AMP + S-sulfanyl-L-cysteinyl-[cysteine desulfurase] + AH2 = [ThiS sulfur-carrier protein]-C-terminal-Gly-aminoethanethioate + L-cysteinyl-[cysteine desulfurase] + A + AMP + 2 H(+). It participates in cofactor biosynthesis; thiamine diphosphate biosynthesis. Its function is as follows. Catalyzes the ATP-dependent transfer of a sulfur to tRNA to produce 4-thiouridine in position 8 of tRNAs, which functions as a near-UV photosensor. Also catalyzes the transfer of sulfur to the sulfur carrier protein ThiS, forming ThiS-thiocarboxylate. This is a step in the synthesis of thiazole, in the thiamine biosynthesis pathway. The sulfur is donated as persulfide by IscS. The protein is Probable tRNA sulfurtransferase of Pediococcus pentosaceus (strain ATCC 25745 / CCUG 21536 / LMG 10740 / 183-1w).